The sequence spans 225 residues: MQLVTAAEMQTIDNYTVETIGMPQDVLIERAAMSVIDVIGAGHFNLDHILVLAGLGNNGADGVAISRLLYAQGFNVSLQFVGNVTRAKDSVKHQLDIIEKYGLVHAEKSDFNEATLIIDAIFGTGLNNLLPEGLQKMIKAANHIEKTVIAVDTPTGIDATTGEVRGAALKAHTTVTFGYNKIGLTQRVGGYLSGNVIVKDIGLLTPQDFNFSLPDKENSPSVATS.

The 201-residue stretch at 9-209 (MQTIDNYTVE…DIGLLTPQDF (201 aa)) folds into the YjeF N-terminal domain. 57-61 (NNGAD) contributes to the (6S)-NADPHX binding site. K(+) contacts are provided by Asn58 and Asp119. Residues 123-129 (GTGLNNL) and Asp152 each bind (6S)-NADPHX. Residue Thr155 participates in K(+) binding.

Belongs to the NnrE/AIBP family. It depends on K(+) as a cofactor.

The catalysed reaction is (6R)-NADHX = (6S)-NADHX. It catalyses the reaction (6R)-NADPHX = (6S)-NADPHX. Catalyzes the epimerization of the S- and R-forms of NAD(P)HX, a damaged form of NAD(P)H that is a result of enzymatic or heat-dependent hydration. This is a prerequisite for the S-specific NAD(P)H-hydrate dehydratase to allow the repair of both epimers of NAD(P)HX. The sequence is that of NAD(P)H-hydrate epimerase from Leuconostoc sp. (strain C2).